Consider the following 466-residue polypeptide: Ribulose bisphosphate carboxylase large chain (466 aa).

An N6,N6,N6-trimethyllysine modification is found at K5. The substrate site is built by N114 and T164. The active-site Proton acceptor is the K166. K168 contributes to the substrate binding site. 3 residues coordinate Mg(2+): K192, D194, and E195. Position 192 is an N6-carboxylysine (K192). H285 serves as the catalytic Proton acceptor. Substrate contacts are provided by R286, H318, and S370.

Belongs to the RuBisCO large chain family. Type I subfamily. In terms of assembly, heterohexadecamer of 8 large chains and 8 small chains. Requires Mg(2+) as cofactor.

It localises to the plastid. The protein resides in the chloroplast. It carries out the reaction 2 (2R)-3-phosphoglycerate + 2 H(+) = D-ribulose 1,5-bisphosphate + CO2 + H2O. The enzyme catalyses D-ribulose 1,5-bisphosphate + O2 = 2-phosphoglycolate + (2R)-3-phosphoglycerate + 2 H(+). RuBisCO catalyzes two reactions: the carboxylation of D-ribulose 1,5-bisphosphate, the primary event in carbon dioxide fixation, as well as the oxidative fragmentation of the pentose substrate in the photorespiration process. Both reactions occur simultaneously and in competition at the same active site. The protein is Ribulose bisphosphate carboxylase large chain of Lobelia sp.